The following is an 866-amino-acid chain: MENEKENLFFEPHKRGLMKTPLKESTAANIVLADIQPDFGPLTTPTKPKEISQGEPWTPTANLKMLISAVSPEIRNRDQKRGLFDNRNGLSDVKDCLHEHFSGDEYEKSQPSRKEKSLGLLCHKFLARYPNYPNPAVNNDICLDEVAEELNVERRRIYDIVNVLESLHMVSRLAKNRYTWHGRHNLNQILETLKSVGEENKYAEQIMMIKKKEYEQEFEVSKSYNTEDPIIKSNTGQNGHPDMCCAERPGVELRAASVNSRKDKSLKVMSQKFVTLFLVSTPQIVSLEIAAKILTWEDHVEDLDRSKFKTKIRRLYDIANVLSSLDLIKKVHVTEERGRKPAFKWTGPEISPNPSGLSPVLPCAASDLEARQSSKENCAKNLFSTRGKPNFTRHPSLIKLVKSIESDRRKINSAPSSPIKTHKAESTQNSVPFRSKMAQLAAICKMQLEEQSSEPRKNVTVQLAGSGHCKSVAPLDTPANAEPEMMAPSLIQPLGVVPLLPSPLSPAVPVILPQTPSGTSYAIYLQPAQAQTITPPPGLSPTVCPTTSSNAMISEDSTDATGENADSDAPKSSVSTRPGSLLPGPERQGAKNREREPAREKGSKRASMLEDSGSKKKFKEDQKAPENVSTTLFPSGYLIPLTQCSTLGAESILSSNENSGTLSPNHSIYSSPIAGVIPVTSSELTAVNFPSFQVTPLKLMVSPTSMAAVPVGNSPALSSSHPLPIQNPSSAIVNFTLQHLGLISPGVQVSTSPGPGTIAVSPRIEAVSVTPENAGAEQGRATKCDASILSQNQTNGQSFAGTGAQQPVPVTPKGSQPVAESFFRTPGGPTKPTGSPCTDFDGANYTSVGTLLVPQRKLEVSVEDVH.

Ser-71 and Ser-102 each carry phosphoserine. 2 consecutive DNA-binding regions follow at residues Arg-113–Gly-182 and Arg-261–Gly-347. 3 disordered regions span residues Arg-409–Asn-429, Thr-532–Leu-632, and Thr-794–Cys-837. Phosphoserine is present on residues Ser-413 and Ser-417. The segment covering Val-543–Met-552 has biased composition (polar residues). Basic and acidic residues-rich tracts occupy residues Gln-588 to Ser-603 and Ser-612 to Ala-624. A compositionally biased stretch (polar residues) spans Thr-794 to Gln-805. The segment covering Thr-825–Gly-834 has biased composition (low complexity).

This sequence belongs to the E2F/DP family. In terms of assembly, homodimer and heterodimer: mainly forms homodimers and, to a lesser extent, heterodimers with E2F8. Dimerization is important for DNA-binding. Interacts with HIF1A.

It is found in the nucleus. Atypical E2F transcription factor that participates in various processes such as angiogenesis and polyploidization of specialized cells. Mainly acts as a transcription repressor that binds DNA independently of DP proteins and specifically recognizes the E2 recognition site 5'-TTTC[CG]CGC-3'. Directly represses transcription of classical E2F transcription factors such as E2F1: component of a feedback loop in S phase by repressing the expression of E2F1, thereby preventing p53/TP53-dependent apoptosis. Plays a key role in polyploidization of cells in placenta and liver by regulating the endocycle, probably by repressing genes promoting cytokinesis and antagonizing action of classical E2F proteins (E2F1, E2F2 and/or E2F3). Required for placental development by promoting polyploidization of trophoblast giant cells. Acts as a promoter of sprouting angiogenesis, possibly by acting as a transcription activator: associates with HIF1A, recognizes and binds the VEGFA promoter, which is different from canonical E2 recognition site, and activates expression of the VEGFA gene. This is Transcription factor E2F8 (E2F8) from Bos taurus (Bovine).